A 200-amino-acid chain; its full sequence is Rho-related protein racH (200 aa).

11–18 contacts GTP; the sequence is GDMSVGKT. An Effector region motif is present at residues 33-41; the sequence is YVPTVFDNY. GTP is bound by residues 58–62 and 117–120; these read DTAGS and TKLD. The tract at residues 178–200 is disordered; sequence EELAKSKKDSKKGDKDSKDCIIQ. Cysteine 197 carries the post-translational modification Cysteine methyl ester. Cysteine 197 carries the S-geranylgeranyl cysteine lipid modification. The propeptide at 198 to 200 is removed in mature form; sequence IIQ.

It belongs to the small GTPase superfamily. Rho family.

The protein localises to the cell membrane. The protein is Rho-related protein racH (racH) of Dictyostelium discoideum (Social amoeba).